A 305-amino-acid polypeptide reads, in one-letter code: Oxygen-dependent coproporphyrinogen-III oxidase (305 aa).

Residue Ser-98 coordinates substrate. A divalent metal cation-binding residues include His-102 and His-112. His-112 serves as the catalytic Proton donor. 114–116 (NVR) contacts substrate. 2 residues coordinate a divalent metal cation: His-151 and His-181. The tract at residues 246-281 (YVEFNLVYDRGTLFGLQSGGRTESILMSMPPLARWE) is important for dimerization. 264–266 (GGR) contacts substrate.

It belongs to the aerobic coproporphyrinogen-III oxidase family. In terms of assembly, homodimer. A divalent metal cation serves as cofactor.

The protein resides in the cytoplasm. The enzyme catalyses coproporphyrinogen III + O2 + 2 H(+) = protoporphyrinogen IX + 2 CO2 + 2 H2O. It participates in porphyrin-containing compound metabolism; protoporphyrin-IX biosynthesis; protoporphyrinogen-IX from coproporphyrinogen-III (O2 route): step 1/1. Functionally, involved in the heme biosynthesis. Catalyzes the aerobic oxidative decarboxylation of propionate groups of rings A and B of coproporphyrinogen-III to yield the vinyl groups in protoporphyrinogen-IX. This Vibrio vulnificus (strain YJ016) protein is Oxygen-dependent coproporphyrinogen-III oxidase.